A 404-amino-acid chain; its full sequence is MHC class I-like protein MILL1 (404 aa).

Residues 1-30 (MMLSRDLRAEAAVRLWIMFLLLEDLLGACA) form the signal peptide. Positions 59 to 150 (EVAGPHTLRY…VTGQKGQDKG (92 aa)) are alpha-1. Residues Asn98, Asn102, and Asn165 are each glycosylated (N-linked (GlcNAc...) asparagine). An alpha-2 region spans residues 151–242 (LHILQATLGC…SLRSEPLDTG (92 aa)). Disulfide bonds link Cys160-Cys223 and Cys262-Cys322. The 115-residue stretch at 224–338 (PAQLQRHLAS…GNIEKRAVIV (115 aa)) folds into the Ig-like C1-type domain. An alpha-3 region spans residues 243 to 342 (SPMVIVTFRN…KRAVIVNTVS (100 aa)). N-linked (GlcNAc...) asparagine glycosylation is present at Asn323. Residues 343 to 373 (GEKTRQPSTSGVGGRVKKSLWTTMTTAFMVT) form a connecting peptide region. Ser374 carries GPI-anchor amidated serine lipidation. The propeptide at 375–404 (WTRKTGGDSTLLLLWWLLFFSTVLAVLTLV) is removed in mature form.

The protein belongs to the MHC class I family. Heterodimer with B2M. In terms of tissue distribution, detected in skin, esophagus, tongue, skin, muscle, uterus, ovary, testis and epididymis.

The protein resides in the cell membrane. The polypeptide is MHC class I-like protein MILL1 (Rattus norvegicus (Rat)).